We begin with the raw amino-acid sequence, 465 residues long: Cerebellar degeneration-related protein 2-like (465 aa).

2 coiled-coil regions span residues Leu38–Arg143 and Leu188–Leu265. The interval Ala282–Arg314 is disordered. 3 positions are modified to phosphoserine: Ser308, Ser318, and Ser344. Positions Met350–His377 form a coiled coil. Residues Arg382–Ser417 form a disordered region. A compositionally biased stretch (basic and acidic residues) spans Ile392 to Glu405.

Belongs to the CDR2 family.

The polypeptide is Cerebellar degeneration-related protein 2-like (CDR2L) (Homo sapiens (Human)).